The following is a 727-amino-acid chain: Fatty acid oxidation complex subunit alpha (727 aa).

Residues 1 to 200 (MNDQQPFSAI…RQGLVDEAVP (200 aa)) are enoyl-CoA hydratase. A 3-hydroxyacyl-CoA dehydrogenase region spans residues 316-727 (KPIHYVGILG…PPTDEDDSAS (412 aa)).

The protein in the N-terminal section; belongs to the enoyl-CoA hydratase/isomerase family. In the central section; belongs to the 3-hydroxyacyl-CoA dehydrogenase family. As to quaternary structure, heterotetramer of two alpha chains (FadJ) and two beta chains (FadI).

Its subcellular location is the cytoplasm. The catalysed reaction is a (3S)-3-hydroxyacyl-CoA = a (2E)-enoyl-CoA + H2O. The enzyme catalyses a 4-saturated-(3S)-3-hydroxyacyl-CoA = a (3E)-enoyl-CoA + H2O. It carries out the reaction a (3S)-3-hydroxyacyl-CoA + NAD(+) = a 3-oxoacyl-CoA + NADH + H(+). It catalyses the reaction (3S)-3-hydroxybutanoyl-CoA = (3R)-3-hydroxybutanoyl-CoA. It functions in the pathway lipid metabolism; fatty acid beta-oxidation. In terms of biological role, catalyzes the formation of a hydroxyacyl-CoA by addition of water on enoyl-CoA. Also exhibits 3-hydroxyacyl-CoA epimerase and 3-hydroxyacyl-CoA dehydrogenase activities. This is Fatty acid oxidation complex subunit alpha from Pectobacterium carotovorum subsp. carotovorum (strain PC1).